The sequence spans 763 residues: Actin filament-associated protein 1-like 1 (763 aa).

Residues 83–137 (LQDMPEDEAESCKAASPEPAKSPSLRHTADLPPPLPNRPPPEDYYEEALPLGPGK) form a disordered region. Ser98, Ser104, and Ser153 each carry phosphoserine. The tract at residues 169-210 (TRMNGELKNSYNDSDAMSSSYESYDEEEEEGKGPQPTHQWPS) is disordered. Polar residues predominate over residues 175-185 (LKNSYNDSDAM). The PH 1 domain occupies 220 to 316 (DCRICAFLLR…WLKVIREVSK (97 aa)). Phosphoserine is present on residues Ser329 and Ser343. Positions 343–380 (SQEKQTSDSDSLGMGDSCSTLGREHGKGKKSSLSELKG) are disordered. One can recognise a PH 2 domain in the interval 413–507 (EVPCCGYLNV…WLGLLLVEMG (95 aa)). Position 552 is a phosphotyrosine (Tyr552). The tract at residues 561-604 (QDEEPERPPGAQVKRHASTCSEKSHRVDPQVKVKRHASSAHQYK) is disordered. The segment covering 582–591 (EKSHRVDPQV) has biased composition (basic and acidic residues). The stretch at 606 to 694 (GKNRAEEDAR…LVTVKERLQQ (89 aa)) forms a coiled coil. The span at 712-724 (SGETANKPQNNVP) shows a compositional bias: polar residues. The disordered stretch occupies residues 712–763 (SGETANKPQNNVPEQPLPVNCVSELRKRSPSIINSNQGRVLQKAKEWEMKKT). Position 742 is a phosphoserine (Ser742). Residues 754–763 (KAKEWEMKKT) are compositionally biased toward basic and acidic residues.

As to quaternary structure, interacts with CTTN.

It localises to the cytoplasm. It is found in the cell projection. Its subcellular location is the podosome. The protein resides in the invadopodium. The protein localises to the cytoskeleton. It localises to the stress fiber. May be involved in podosome and invadosome formation. This is Actin filament-associated protein 1-like 1 (AFAP1L1) from Bos taurus (Bovine).